The sequence spans 160 residues: 6,7-dimethyl-8-ribityllumazine synthase (160 aa).

Residues Phe-32, 66-68, and 90-92 each bind 5-amino-6-(D-ribitylamino)uracil; these read ALE and CII. 95–96 contacts (2S)-2-hydroxy-3-oxobutyl phosphate; sequence ET. The active-site Proton donor is His-98. Asn-123 contacts 5-amino-6-(D-ribitylamino)uracil. Position 137 (Arg-137) interacts with (2S)-2-hydroxy-3-oxobutyl phosphate.

Belongs to the DMRL synthase family.

It catalyses the reaction (2S)-2-hydroxy-3-oxobutyl phosphate + 5-amino-6-(D-ribitylamino)uracil = 6,7-dimethyl-8-(1-D-ribityl)lumazine + phosphate + 2 H2O + H(+). It functions in the pathway cofactor biosynthesis; riboflavin biosynthesis; riboflavin from 2-hydroxy-3-oxobutyl phosphate and 5-amino-6-(D-ribitylamino)uracil: step 1/2. Its function is as follows. Catalyzes the formation of 6,7-dimethyl-8-ribityllumazine by condensation of 5-amino-6-(D-ribitylamino)uracil with 3,4-dihydroxy-2-butanone 4-phosphate. This is the penultimate step in the biosynthesis of riboflavin. The protein is 6,7-dimethyl-8-ribityllumazine synthase of Methylibium petroleiphilum (strain ATCC BAA-1232 / LMG 22953 / PM1).